The primary structure comprises 159 residues: Phosphopantetheine adenylyltransferase (159 aa).

Thr10 is a binding site for substrate. Residues 10-11 (TF) and His18 each bind ATP. Substrate contacts are provided by Lys42, Met74, and Arg88. Residues 89-91 (GLR), Glu99, and 124-130 (WSFISSS) contribute to the ATP site.

It belongs to the bacterial CoaD family. Homohexamer. Requires Mg(2+) as cofactor.

The protein localises to the cytoplasm. The enzyme catalyses (R)-4'-phosphopantetheine + ATP + H(+) = 3'-dephospho-CoA + diphosphate. It functions in the pathway cofactor biosynthesis; coenzyme A biosynthesis; CoA from (R)-pantothenate: step 4/5. In terms of biological role, reversibly transfers an adenylyl group from ATP to 4'-phosphopantetheine, yielding dephospho-CoA (dPCoA) and pyrophosphate. This is Phosphopantetheine adenylyltransferase from Salmonella paratyphi A (strain ATCC 9150 / SARB42).